Consider the following 172-residue polypeptide: Ribosome maturation factor RimM (172 aa).

The PRC barrel domain maps to 94-167 (EGSYYYKDII…VAHVIVPEGL (74 aa)).

It belongs to the RimM family. In terms of assembly, binds ribosomal protein uS19.

The protein localises to the cytoplasm. An accessory protein needed during the final step in the assembly of 30S ribosomal subunit, possibly for assembly of the head region. Essential for efficient processing of 16S rRNA. May be needed both before and after RbfA during the maturation of 16S rRNA. It has affinity for free ribosomal 30S subunits but not for 70S ribosomes. The protein is Ribosome maturation factor RimM of Lacticaseibacillus paracasei (strain ATCC 334 / BCRC 17002 / CCUG 31169 / CIP 107868 / KCTC 3260 / NRRL B-441) (Lactobacillus paracasei).